We begin with the raw amino-acid sequence, 481 residues long: Tryptophan--tRNA ligase, cytoplasmic (481 aa).

One can recognise a WHEP-TRS domain in the interval serine 12–proline 68. Position 158 is an N6-succinyllysine (lysine 158). Positions proline 168 to histidine 177 match the 'HIGH' region motif. A 'KMSKS' region motif is present at residues lysine 353–serine 357. Serine 355 is subject to Phosphoserine.

This sequence belongs to the class-I aminoacyl-tRNA synthetase family. In terms of assembly, homodimer. Interacts with oxidized form of GAPDH. In terms of processing, proteolytic cleavage generates 2 forms; T1-TrpRS and T2-TrpRS. In terms of tissue distribution, isoform 2 is widely expressed, isoform 1 is found only in embryonic stem cells.

The protein localises to the cytoplasm. It carries out the reaction tRNA(Trp) + L-tryptophan + ATP = L-tryptophyl-tRNA(Trp) + AMP + diphosphate + H(+). In terms of biological role, catalyzes the attachment of tryptophan to tRNA(Trp) in a two-step reaction: tryptophan is first activated by ATP to form Trp-AMP and then transferred to the acceptor end of the tRNA(Trp). Could also possess an angiostatic activity. The polypeptide is Tryptophan--tRNA ligase, cytoplasmic (Mus musculus (Mouse)).